The primary structure comprises 319 residues: tRNA uridine(34) hydroxylase (319 aa).

In terms of domain architecture, Rhodanese spans 124-218 (LDEDTVILDA…YGKNEETKGE (95 aa)). Catalysis depends on C178, which acts as the Cysteine persulfide intermediate.

It belongs to the TrhO family.

It carries out the reaction uridine(34) in tRNA + AH2 + O2 = 5-hydroxyuridine(34) in tRNA + A + H2O. Its function is as follows. Catalyzes oxygen-dependent 5-hydroxyuridine (ho5U) modification at position 34 in tRNAs. This is tRNA uridine(34) hydroxylase from Listeria monocytogenes serotype 4a (strain HCC23).